The chain runs to 188 residues: CyanoP (188 aa).

Residues 1–23 (MLKKSLSTAVVLVTLLLSFTLTA) form the signal peptide. Residue cysteine 24 is the site of N-palmitoyl cysteine attachment. A lipid anchor (S-diacylglycerol cysteine) is attached at cysteine 24.

Belongs to the PsbP family. CyanoP subfamily. As to quaternary structure, monomer. Present in about 3% of photosystem II (PSII) preparations. Purifies with partially assembled PSII complexes, in addition to a small amount of monomeric and dimeric PSII, and trimeric PSI.

It localises to the cellular thylakoid membrane. Plays a role in the early stages of photosystem II (PSII) assembly; binds to D2 (psbD) and may facilitate its incorporation into PSII. Required for optimal photoautotrophic growth in the absence of Ca(2+) or Cl(-), functions in optimizing PSII water oxidation/O(2) evolving activity. Might be involved in assembly of the oxygen evolving complex. The protein is CyanoP of Synechocystis sp. (strain ATCC 27184 / PCC 6803 / Kazusa).